Here is a 721-residue protein sequence, read N- to C-terminus: Tripartite terminase subunit 1 (721 aa).

The C3H1-type zinc finger occupies 189–217; it reads CLKCYEELSLVPNQGKSIRKRLAGKFCNH. 625–632 contributes to the ATP binding site; sequence YNDVFGKQ.

The protein belongs to the herpesviridae TRM1 protein family. Associates with TRM2 and TRM3 to form the tripartite terminase complex. Interacts with portal protein.

It is found in the host nucleus. Its function is as follows. Component of the molecular motor that translocates viral genomic DNA in empty capsid during DNA packaging. Forms a tripartite terminase complex together with TRM2 and TRM3 in the host cytoplasm. Once the complex reaches the host nucleus, it interacts with the capsid portal vertex. This portal forms a ring in which genomic DNA is translocated into the capsid. TRM1 carries an endonuclease activity that plays an important role for the cleavage of concatemeric viral DNA into unit length genomes. The sequence is that of Tripartite terminase subunit 1 from Homo sapiens (Human).